A 249-amino-acid polypeptide reads, in one-letter code: MIIKVMTLFPEMFSGPLGNSIIQRAQENRILHIQCVNIRDYAENKHKKVDDYPFGGGPGMVMTPQPIVSCYESIVKEFQDKNHVEQPKVIYLSPKGKKFDQEMAERLSEENALILLCGHYEGIDQRVIDEIVTDEISIGDYVLTGGEIPAMVLIDAVARLIPGVLSQDASFEEESFYSGLLEYPQYTRPRVFRGRSVPDVLTSGNHSKIQEWRRNQSLELTFHRRPDLLKDFILTKKDQLFLEQIKSKK.

S-adenosyl-L-methionine contacts are provided by residues Gly-118 and 138–143 (IGDYVL).

It belongs to the RNA methyltransferase TrmD family. In terms of assembly, homodimer.

Its subcellular location is the cytoplasm. It carries out the reaction guanosine(37) in tRNA + S-adenosyl-L-methionine = N(1)-methylguanosine(37) in tRNA + S-adenosyl-L-homocysteine + H(+). Its function is as follows. Specifically methylates guanosine-37 in various tRNAs. This Alkaliphilus oremlandii (strain OhILAs) (Clostridium oremlandii (strain OhILAs)) protein is tRNA (guanine-N(1)-)-methyltransferase.